The chain runs to 296 residues: Cytidine deaminase (296 aa).

CMP/dCMP-type deaminase domains follow at residues 47–167 and 186–296; these read ELNE…FGPS and DSND…VEPE. 88–90 lines the substrate pocket; sequence NIE. Histidine 101 contacts Zn(2+). Glutamate 103 (proton donor) is an active-site residue. 2 residues coordinate Zn(2+): cysteine 128 and cysteine 131.

The protein belongs to the cytidine and deoxycytidylate deaminase family. Homodimer. Zn(2+) is required as a cofactor.

It catalyses the reaction cytidine + H2O + H(+) = uridine + NH4(+). The catalysed reaction is 2'-deoxycytidine + H2O + H(+) = 2'-deoxyuridine + NH4(+). Its function is as follows. This enzyme scavenges exogenous and endogenous cytidine and 2'-deoxycytidine for UMP synthesis. This chain is Cytidine deaminase, found in Shewanella halifaxensis (strain HAW-EB4).